A 318-amino-acid polypeptide reads, in one-letter code: Acetyl-coenzyme A carboxylase carboxyl transferase subunit alpha (318 aa).

The region spanning 31-292 (DLTNEIEKLE…NKTITKSLHA (262 aa)) is the CoA carboxyltransferase C-terminal domain.

The protein belongs to the AccA family. As to quaternary structure, acetyl-CoA carboxylase is a heterohexamer composed of biotin carboxyl carrier protein (AccB), biotin carboxylase (AccC) and two subunits each of ACCase subunit alpha (AccA) and ACCase subunit beta (AccD).

It localises to the cytoplasm. The catalysed reaction is N(6)-carboxybiotinyl-L-lysyl-[protein] + acetyl-CoA = N(6)-biotinyl-L-lysyl-[protein] + malonyl-CoA. The protein operates within lipid metabolism; malonyl-CoA biosynthesis; malonyl-CoA from acetyl-CoA: step 1/1. Component of the acetyl coenzyme A carboxylase (ACC) complex. First, biotin carboxylase catalyzes the carboxylation of biotin on its carrier protein (BCCP) and then the CO(2) group is transferred by the carboxyltransferase to acetyl-CoA to form malonyl-CoA. The polypeptide is Acetyl-coenzyme A carboxylase carboxyl transferase subunit alpha (Listeria monocytogenes serotype 4a (strain HCC23)).